A 197-amino-acid polypeptide reads, in one-letter code: Probable nicotinate-nucleotide adenylyltransferase (197 aa).

It belongs to the NadD family.

The catalysed reaction is nicotinate beta-D-ribonucleotide + ATP + H(+) = deamido-NAD(+) + diphosphate. Its pathway is cofactor biosynthesis; NAD(+) biosynthesis; deamido-NAD(+) from nicotinate D-ribonucleotide: step 1/1. Its function is as follows. Catalyzes the reversible adenylation of nicotinate mononucleotide (NaMN) to nicotinic acid adenine dinucleotide (NaAD). This chain is Probable nicotinate-nucleotide adenylyltransferase, found in Chlorobium phaeobacteroides (strain DSM 266 / SMG 266 / 2430).